Here is a 347-residue protein sequence, read N- to C-terminus: NADH-ubiquinone oxidoreductase chain 2 (347 aa).

Transmembrane regions (helical) follow at residues 13 to 33, 59 to 79, 84 to 104, 111 to 131, 149 to 169, 178 to 198, 201 to 221, 240 to 260, 276 to 296, and 326 to 346; these read IILGTSIVITSSHWLTVWIGF, YFLIQATASMLLMLAVTINLL, WAVSNMIDPLALTIMTLALAM, FHFWVPEVTQGVPLLSGLILL, IDPTLILTMSILSVLVGGWGG, IMAYSSISHMGWMTAILIYNP, TILNLLLYIMMTSTTFILLII, IAIIILTTMLSLGGLPPLTGF, IALSLFMAMAALLNLYFYTRL, and LSPLIIISTMILPLTPTMSAL.

Belongs to the complex I subunit 2 family. As to quaternary structure, core subunit of respiratory chain NADH dehydrogenase (Complex I) which is composed of 45 different subunits. Interacts with TMEM242.

Its subcellular location is the mitochondrion inner membrane. The catalysed reaction is a ubiquinone + NADH + 5 H(+)(in) = a ubiquinol + NAD(+) + 4 H(+)(out). Its function is as follows. Core subunit of the mitochondrial membrane respiratory chain NADH dehydrogenase (Complex I) that is believed to belong to the minimal assembly required for catalysis. Complex I functions in the transfer of electrons from NADH to the respiratory chain. The immediate electron acceptor for the enzyme is believed to be ubiquinone. The sequence is that of NADH-ubiquinone oxidoreductase chain 2 from Chrotopterus auritus (Peters's woolly false vampire bat).